The primary structure comprises 339 residues: 4-hydroxy-2-oxovalerate aldolase 3 (339 aa).

The Pyruvate carboxyltransferase domain maps to 7–259 (IRVTDTSLRD…KTGIDFFAIA (253 aa)). 15 to 16 (RD) lines the substrate pocket. Residue Asp16 participates in Mn(2+) binding. His19 serves as the catalytic Proton acceptor. Positions 169 and 198 each coordinate substrate. 2 residues coordinate Mn(2+): His198 and His200. Tyr289 is a binding site for substrate.

This sequence belongs to the 4-hydroxy-2-oxovalerate aldolase family.

The catalysed reaction is (S)-4-hydroxy-2-oxopentanoate = acetaldehyde + pyruvate. In Rhodococcus opacus (strain B4), this protein is 4-hydroxy-2-oxovalerate aldolase 3.